A 641-amino-acid polypeptide reads, in one-letter code: Calpain-6 (641 aa).

One can recognise a Calpain catalytic domain in the interval 26-343 (LFCDPTFLPE…FHKLNVCRNV (318 aa)). The interval 344–495 (NNPVFGRKEL…IFSEVPVQLR (152 aa)) is domain III. One can recognise a C2 domain in the interval 498–621 (TLDMPKMSCW…YLRKKGGPTA (124 aa)).

Belongs to the peptidase C2 family. In terms of assembly, interacts (via domain III) with microtubules. Interacts (via domain II) with ARHGEF2 (via the N-terminal zinc finger).

Its subcellular location is the cytoplasm. It is found in the perinuclear region. It localises to the cytoskeleton. The protein localises to the spindle. In terms of biological role, microtubule-stabilizing protein that may be involved in the regulation of microtubule dynamics and cytoskeletal organization. May act as a regulator of RAC1 activity through interaction with ARHGEF2 to control lamellipodial formation and cell mobility. Does not seem to have protease activity as it has lost the active site residues. The polypeptide is Calpain-6 (Capn6) (Mus musculus (Mouse)).